Here is a 378-residue protein sequence, read N- to C-terminus: Probable dihydroorotase-like protein (378 aa).

This sequence belongs to the metallo-dependent hydrolases superfamily. DHOase family. PyrC' subfamily.

Functionally, non-functional DHOase. In Helicobacter pylori (strain ATCC 700392 / 26695) (Campylobacter pylori), this protein is Probable dihydroorotase-like protein (pyrC').